A 537-amino-acid chain; its full sequence is Immunoglobulin-like domain-containing receptor 1 (537 aa).

The signal sequence occupies residues 1-22; sequence MGCGLLAAGLLLFTWLPAGCLS. The region spanning 23-161 is the Ig-like V-type domain; it reads LLVTVQHTER…TSGDPDKEVK (139 aa). Topologically, residues 23-166 are extracellular; the sequence is LLVTVQHTER…DKEVKLIVLH (144 aa). Cys-44 and Cys-144 form a disulfide bridge. Residues 167-187 form a helical membrane-spanning segment; that stretch reads WLTVIFIILGALLLLLLIGVC. The Cytoplasmic portion of the chain corresponds to 188-537; the sequence is WCQCCPQYCC…SSHSGRSVVI (350 aa). The disordered stretch occupies residues 333–537; the sequence is PPLIRDPPSS…SSHSGRSVVI (205 aa). The span at 341 to 357 shows a compositional bias: polar residues; it reads SSRTSNPSHQQRLNAVS. Basic and acidic residues-rich tracts occupy residues 359–380 and 434–444; these read RHCD…RELQ and RRPEPREGAQR. Residues 480 to 490 are compositionally biased toward basic residues; it reads QRRHHHRRRRS. Ser-490 and Ser-492 each carry phosphoserine. The span at 518 to 530 shows a compositional bias: basic and acidic residues; the sequence is GNVERRLERESSH.

Belongs to the immunoglobulin superfamily. LISCH7 family. In terms of assembly, homooligomer. Interacts with MARVELD2 and OCLN; the interaction is required to recruit MARVELD2 to tricellular contacts. Interacts (via C-terminus) with TRA2A, TRA2B and SRSF1. Interacts with PLSCR1. In terms of tissue distribution, expressed in the vestibule and in hair cells and supporting cells of the cochlea. Expressed in epithelial tissues. Highly expressed in colon but also detected in small intestine, bladder and lung. In colon, expressed in the upper portion of the crypts (at protein level). Expressed in CCK secretory cells of the proximal small intestine (at protein level). Expressed in the organ of Corti, stria vascularis, utricle and saccule of the inner ear.

Its subcellular location is the cell membrane. The protein resides in the cell junction. It is found in the tight junction. The protein localises to the nucleus. It localises to the cytoplasm. Maintains epithelial barrier function by recruiting MARVELD2/tricellulin to tricellular tight junctions (tTJs). Crucial for normal hearing by maintaining the structural and functional integrity of tTJs, which are critical for the survival of auditory neurosensory HCs. Mediates fatty acids and lipoproteins-stimulated CCK/cholecystokinin secretion in the small intestine. In the inner ear, may regulate alternative pre-mRNA splicing via binding to TRA2A, TRA2B and SRSF1. In Mus musculus (Mouse), this protein is Immunoglobulin-like domain-containing receptor 1.